The following is a 557-amino-acid chain: Dihydroxy-acid dehydratase 2 (557 aa).

Position 50 (Cys-50) interacts with [2Fe-2S] cluster. Asp-82 contributes to the Mg(2+) binding site. Cys-123 provides a ligand contact to [2Fe-2S] cluster. Residues Asp-124 and Lys-125 each coordinate Mg(2+). Residue Lys-125 is modified to N6-carboxylysine. A [2Fe-2S] cluster-binding site is contributed by Cys-195. Glu-447 contacts Mg(2+). Ser-473 functions as the Proton acceptor in the catalytic mechanism.

This sequence belongs to the IlvD/Edd family. In terms of assembly, homodimer. It depends on [2Fe-2S] cluster as a cofactor. Mg(2+) is required as a cofactor.

It carries out the reaction (2R)-2,3-dihydroxy-3-methylbutanoate = 3-methyl-2-oxobutanoate + H2O. It catalyses the reaction (2R,3R)-2,3-dihydroxy-3-methylpentanoate = (S)-3-methyl-2-oxopentanoate + H2O. Its pathway is amino-acid biosynthesis; L-isoleucine biosynthesis; L-isoleucine from 2-oxobutanoate: step 3/4. It functions in the pathway amino-acid biosynthesis; L-valine biosynthesis; L-valine from pyruvate: step 3/4. In terms of biological role, functions in the biosynthesis of branched-chain amino acids. Catalyzes the dehydration of (2R,3R)-2,3-dihydroxy-3-methylpentanoate (2,3-dihydroxy-3-methylvalerate) into 2-oxo-3-methylpentanoate (2-oxo-3-methylvalerate) and of (2R)-2,3-dihydroxy-3-methylbutanoate (2,3-dihydroxyisovalerate) into 2-oxo-3-methylbutanoate (2-oxoisovalerate), the penultimate precursor to L-isoleucine and L-valine, respectively. The polypeptide is Dihydroxy-acid dehydratase 2 (Burkholderia lata (strain ATCC 17760 / DSM 23089 / LMG 22485 / NCIMB 9086 / R18194 / 383)).